A 395-amino-acid polypeptide reads, in one-letter code: Pyruvate synthase subunit PorA (395 aa).

In terms of assembly, heterotetramer of one alpha, one beta, one delta and one gamma chain.

It catalyses the reaction 2 oxidized [2Fe-2S]-[ferredoxin] + pyruvate + CoA = 2 reduced [2Fe-2S]-[ferredoxin] + acetyl-CoA + CO2 + H(+). The polypeptide is Pyruvate synthase subunit PorA (porA) (Pyrococcus horikoshii (strain ATCC 700860 / DSM 12428 / JCM 9974 / NBRC 100139 / OT-3)).